Reading from the N-terminus, the 508-residue chain is Maturase K (508 aa).

This sequence belongs to the intron maturase 2 family. MatK subfamily.

The protein localises to the plastid. Its subcellular location is the chloroplast. Its function is as follows. Usually encoded in the trnK tRNA gene intron. Probably assists in splicing its own and other chloroplast group II introns. The polypeptide is Maturase K (Marathrum schiedeanum).